Reading from the N-terminus, the 104-residue chain is Large ribosomal subunit protein bL21 (104 aa).

Belongs to the bacterial ribosomal protein bL21 family. As to quaternary structure, part of the 50S ribosomal subunit. Contacts protein L20.

Functionally, this protein binds to 23S rRNA in the presence of protein L20. The sequence is that of Large ribosomal subunit protein bL21 from Streptococcus pyogenes serotype M1.